The sequence spans 203 residues: Translation initiation factor IF-3 (203 aa).

Residues 172–182 (EAPKNEKKTKE) are compositionally biased toward basic and acidic residues. The interval 172 to 203 (EAPKNEKKTKENNPPFNRINLMKGENHAKNED) is disordered.

Belongs to the IF-3 family. As to quaternary structure, monomer.

The protein localises to the cytoplasm. In terms of biological role, IF-3 binds to the 30S ribosomal subunit and shifts the equilibrium between 70S ribosomes and their 50S and 30S subunits in favor of the free subunits, thus enhancing the availability of 30S subunits on which protein synthesis initiation begins. This is Translation initiation factor IF-3 from Helicobacter pylori (strain ATCC 700392 / 26695) (Campylobacter pylori).